Consider the following 118-residue polypeptide: Large ribosomal subunit protein bL20 (118 aa).

The protein belongs to the bacterial ribosomal protein bL20 family.

In terms of biological role, binds directly to 23S ribosomal RNA and is necessary for the in vitro assembly process of the 50S ribosomal subunit. It is not involved in the protein synthesizing functions of that subunit. This chain is Large ribosomal subunit protein bL20, found in Thermotoga petrophila (strain ATCC BAA-488 / DSM 13995 / JCM 10881 / RKU-1).